The chain runs to 465 residues: MTLFSCSVQMPLEERSLTNLPLNLLFRILSHLDMNDLQNIGKTCTLLRMLANENIVYRNAVIGSNGNMWWTKNVLVDVFDVLNFNRKAMKTLNSHNISLVASLRNVQRKYKLGVIDPARKTISYRTNEVESKEKGSVKDLNMDLNEPTEITREQIAHTAILQGMNQFIELNDKAFRTHSADSDDTYIEENNGEIHSLHGLEKNTTFEEDLVKKPPFIPSPTFSNYSRSSTNSVFSSSSPKLLDDDWNNITMDFTKSRDPDYKEMTPTSTESSDSITRLRKSNKVKDKAELFEKLIFRDSRPLKTKKKDNPRLKLSSSLSANDEDFRKIISPPSDILPKVGRRSVSRGYLEEIERHYPDFNGETTNPLAIKRVNSTKIANYEQLIIKENSSNCKGITEKNDENKFQRSHTSPVIELSKPHQRSKLKAVVTDGNKICYRKIELDNPSGSNTNDHVIKRLDANTDFNI.

An F-box domain is found at glutamate 14–alanine 60. The interval phenylalanine 253–arginine 279 is disordered. Over residues threonine 254–glutamate 263 the composition is skewed to basic and acidic residues. The segment covering threonine 265–isoleucine 275 has biased composition (polar residues).

The protein localises to the mitochondrion. The chain is Mitochondrial F-box protein MFB1 (MFB1) from Saccharomyces cerevisiae (strain ATCC 204508 / S288c) (Baker's yeast).